A 456-amino-acid chain; its full sequence is Exodeoxyribonuclease 7 large subunit (456 aa).

This sequence belongs to the XseA family. As to quaternary structure, heterooligomer composed of large and small subunits.

It localises to the cytoplasm. It catalyses the reaction Exonucleolytic cleavage in either 5'- to 3'- or 3'- to 5'-direction to yield nucleoside 5'-phosphates.. In terms of biological role, bidirectionally degrades single-stranded DNA into large acid-insoluble oligonucleotides, which are then degraded further into small acid-soluble oligonucleotides. This is Exodeoxyribonuclease 7 large subunit from Erwinia tasmaniensis (strain DSM 17950 / CFBP 7177 / CIP 109463 / NCPPB 4357 / Et1/99).